Consider the following 355-residue polypeptide: 3-dehydroquinate synthase (355 aa).

NAD(+)-binding positions include 71 to 76, 105 to 109, 129 to 130, Lys-142, and Lys-151; these read EGEASK, GVVGD, and TS. Glu-184, His-246, and His-263 together coordinate Zn(2+).

Belongs to the sugar phosphate cyclases superfamily. Dehydroquinate synthase family. Requires Co(2+) as cofactor. Zn(2+) is required as a cofactor. It depends on NAD(+) as a cofactor.

The protein resides in the cytoplasm. It catalyses the reaction 7-phospho-2-dehydro-3-deoxy-D-arabino-heptonate = 3-dehydroquinate + phosphate. It participates in metabolic intermediate biosynthesis; chorismate biosynthesis; chorismate from D-erythrose 4-phosphate and phosphoenolpyruvate: step 2/7. Catalyzes the conversion of 3-deoxy-D-arabino-heptulosonate 7-phosphate (DAHP) to dehydroquinate (DHQ). In Streptococcus thermophilus (strain CNRZ 1066), this protein is 3-dehydroquinate synthase.